We begin with the raw amino-acid sequence, 505 residues long: MIKIQPEEISSVIRKQIEQYNQEVKVVNTGTVLQVGDGIARIYGLAKAMAGELLEFEDGTVGIALNLESNNVGAVLMGDGFSIQEGSRVKATGKIAQIPIGESYIGRVVDALARPIDGKGDIPSSETRLIESPAPGIISRRSVYEPLQTGLVSVDAMIPIGRGQRELIIGDRQTGKTAVAIDTILNQKGQNVICVYVAIGQKASSVAQVVSTLEENGAMAYTIIVAENANAPATLQYLAPYTGATLAEFFMYSGRHTLVIYDDLSKQAQAYREMSLLLRRPPGREAYPGDVFYLHSRLLERAAKLSNALGEGSMTALPIIETQAGDVAAYIPTNVISITDGQIFLSADLFNSGIRPAINVGISVSRVGSAAQIKAMKQVAGKLKLELAQFAELEAFAQFASDLDKATQNQLARGRRLRELLKQAQSSPLPVAQQVLTIYAGVNGYLDSIAIEDVKKFLAGLRNYVITSKAAIINNINSSKAVTPETEGMMKEAINEYKKVFAAGA.

ATP is bound at residue 170–177 (GDRQTGKT).

Belongs to the ATPase alpha/beta chains family. In terms of assembly, F-type ATPases have 2 components, CF(1) - the catalytic core - and CF(0) - the membrane proton channel. CF(1) has five subunits: alpha(3), beta(3), gamma(1), delta(1), epsilon(1). CF(0) has four main subunits: a, b, b' and c.

Its subcellular location is the plastid. It is found in the chloroplast thylakoid membrane. It carries out the reaction ATP + H2O + 4 H(+)(in) = ADP + phosphate + 5 H(+)(out). Functionally, produces ATP from ADP in the presence of a proton gradient across the membrane. The alpha chain is a regulatory subunit. The polypeptide is ATP synthase subunit alpha, chloroplastic (Mesostigma viride (Green alga)).